The sequence spans 132 residues: Fatty acid-binding protein 1 (132 aa).

Position 2 is an N-acetylalanine (Ala-2).

The protein belongs to the calycin superfamily. Fatty-acid binding protein (FABP) family.

This chain is Fatty acid-binding protein 1 (FABP-1), found in Fasciola gigantica (Giant liver fluke).